Consider the following 138-residue polypeptide: Small ribosomal subunit protein uS11 (138 aa).

Disordered stretches follow at residues 1–29 and 117–138; these read MPPK…PHGA and GAIS…RRRV. Over residues 13 to 22 the composition is skewed to basic residues; that stretch reads KGQKTRRREK.

It belongs to the universal ribosomal protein uS11 family. Part of the 30S ribosomal subunit. Interacts with proteins S7 and S18. Binds to IF-3.

Its function is as follows. Located on the platform of the 30S subunit, it bridges several disparate RNA helices of the 16S rRNA. Forms part of the Shine-Dalgarno cleft in the 70S ribosome. This Mycobacterium ulcerans (strain Agy99) protein is Small ribosomal subunit protein uS11.